Reading from the N-terminus, the 438-residue chain is Probable tRNA pseudouridine synthase D (438 aa).

The Nucleophile role is filled by Asp-86. The TRUD domain maps to 165–390; the sequence is GVPNFFGIQR…SKGTRREVLL (226 aa).

The protein belongs to the pseudouridine synthase TruD family.

It carries out the reaction uridine(13) in tRNA = pseudouridine(13) in tRNA. Its function is as follows. Could be responsible for synthesis of pseudouridine from uracil-13 in transfer RNAs. The polypeptide is Probable tRNA pseudouridine synthase D (Methanosarcina mazei (strain ATCC BAA-159 / DSM 3647 / Goe1 / Go1 / JCM 11833 / OCM 88) (Methanosarcina frisia)).